The sequence spans 483 residues: Kynureninase 1 (483 aa).

Residues leucine 147, threonine 148, 175–178, serine 232, aspartate 261, histidine 264, and tyrosine 286 each bind pyridoxal 5'-phosphate; that span reads FPSD. Residue lysine 287 is modified to N6-(pyridoxal phosphate)lysine. 2 residues coordinate pyridoxal 5'-phosphate: tryptophan 326 and asparagine 354.

This sequence belongs to the kynureninase family. In terms of assembly, homodimer. Requires pyridoxal 5'-phosphate as cofactor.

The protein localises to the cytoplasm. It carries out the reaction L-kynurenine + H2O = anthranilate + L-alanine + H(+). It catalyses the reaction 3-hydroxy-L-kynurenine + H2O = 3-hydroxyanthranilate + L-alanine + H(+). It functions in the pathway amino-acid degradation; L-kynurenine degradation; L-alanine and anthranilate from L-kynurenine: step 1/1. It participates in cofactor biosynthesis; NAD(+) biosynthesis; quinolinate from L-kynurenine: step 2/3. Its function is as follows. Catalyzes the cleavage of L-kynurenine (L-Kyn) and L-3-hydroxykynurenine (L-3OHKyn) into anthranilic acid (AA) and 3-hydroxyanthranilic acid (3-OHAA), respectively. This chain is Kynureninase 1 (bna5-1), found in Aspergillus terreus (strain NIH 2624 / FGSC A1156).